The following is a 296-amino-acid chain: Light-inducible protein CPRF3 (296 aa).

3 disordered regions span residues 1-27, 98-165, and 190-223; these read MSDG…ITTT, PNLA…GSLE, and RVND…KSDE. The segment covering 107-117 has biased composition (basic and acidic residues); that stretch reads VGRKISDEKGR. Over residues 145 to 156 the composition is skewed to low complexity; the sequence is SSSDNDCPSLSS. The bZIP domain occupies 196-259; that stretch reads ELKRQRRKQS…AEVTSENHSI (64 aa). The tract at residues 198–220 is basic motif; the sequence is KRQRRKQSNRESARRSRLRKQAK. The leucine-zipper stretch occupies residues 224 to 245; the sequence is LQERLDNLSKENRILRKNLQRI.

The protein belongs to the bZIP family. Binds DNA as a dimer.

The protein localises to the nucleus. Binds to the G-box-like motif (5'-ACGTGGC-3') of the chalcone synthase (CHS) gene promoter. G-box and G-box-like motifs are defined in promoters of certain plant genes which are regulated by such diverse stimuli as light-induction or hormone control. In Petroselinum crispum (Parsley), this protein is Light-inducible protein CPRF3 (CPRF3).